A 178-amino-acid polypeptide reads, in one-letter code: UPF0114 protein HPSH_00970 (178 aa).

The next 4 membrane-spanning stretches (helical) occupy residues 15-35 (WLLA…GYVF), 54-74 (LVLS…VLMV), 102-122 (FNAL…IFLL), and 145-165 (PIFW…LAAV).

This sequence belongs to the UPF0114 family.

Its subcellular location is the cell membrane. In Helicobacter pylori (strain Shi470), this protein is UPF0114 protein HPSH_00970.